The sequence spans 181 residues: Ribosome maturation factor RimP (181 aa).

This sequence belongs to the RimP family.

Its subcellular location is the cytoplasm. Its function is as follows. Required for maturation of 30S ribosomal subunits. This chain is Ribosome maturation factor RimP, found in Mycolicibacterium smegmatis (strain ATCC 700084 / mc(2)155) (Mycobacterium smegmatis).